A 262-amino-acid polypeptide reads, in one-letter code: ATP synthase subunit a 1 (262 aa).

The next 5 helical transmembrane spans lie at 30 to 50 (TVHI…ILVF), 91 to 111 (IAPL…MDLI), 131 to 151 (IVPT…FALM), 201 to 221 (LFGN…LMPW), and 232 to 252 (AIFH…LTIV).

The protein belongs to the ATPase A chain family. As to quaternary structure, F-type ATPases have 2 components, CF(1) - the catalytic core - and CF(0) - the membrane proton channel. CF(1) has five subunits: alpha(3), beta(3), gamma(1), delta(1), epsilon(1). CF(0) has three main subunits: a(1), b(2) and c(9-12). The alpha and beta chains form an alternating ring which encloses part of the gamma chain. CF(1) is attached to CF(0) by a central stalk formed by the gamma and epsilon chains, while a peripheral stalk is formed by the delta and b chains.

Its subcellular location is the cell inner membrane. Functionally, key component of the proton channel; it plays a direct role in the translocation of protons across the membrane. This is ATP synthase subunit a 1 from Photobacterium profundum (strain SS9).